The sequence spans 171 residues: Ribosome maturation factor RimM (171 aa).

The region spanning Asp97 to Leu169 is the PRC barrel domain.

It belongs to the RimM family. As to quaternary structure, binds ribosomal protein uS19.

The protein localises to the cytoplasm. In terms of biological role, an accessory protein needed during the final step in the assembly of 30S ribosomal subunit, possibly for assembly of the head region. Essential for efficient processing of 16S rRNA. May be needed both before and after RbfA during the maturation of 16S rRNA. It has affinity for free ribosomal 30S subunits but not for 70S ribosomes. This Lactococcus lactis subsp. cremoris (strain MG1363) protein is Ribosome maturation factor RimM.